We begin with the raw amino-acid sequence, 391 residues long: Dual-specificity RNA methyltransferase RlmN (391 aa).

The interval 1-20 (MTSVVADSLTETKTDSQKPI) is disordered. Residues 10 to 20 (TETKTDSQKPI) are compositionally biased toward basic and acidic residues. The active-site Proton acceptor is glutamate 120. The Radical SAM core domain occupies 126–366 (DADRGTLCIS…APVRRTRGQD (241 aa)). The cysteines at positions 133 and 371 are disulfide-linked. 3 residues coordinate [4Fe-4S] cluster: cysteine 140, cysteine 144, and cysteine 147. Residues 195–196 (GE), serine 227, 249–251 (SLH), and asparagine 328 each bind S-adenosyl-L-methionine. Cysteine 371 serves as the catalytic S-methylcysteine intermediate.

This sequence belongs to the radical SAM superfamily. RlmN family. It depends on [4Fe-4S] cluster as a cofactor.

It is found in the cytoplasm. The catalysed reaction is adenosine(2503) in 23S rRNA + 2 reduced [2Fe-2S]-[ferredoxin] + 2 S-adenosyl-L-methionine = 2-methyladenosine(2503) in 23S rRNA + 5'-deoxyadenosine + L-methionine + 2 oxidized [2Fe-2S]-[ferredoxin] + S-adenosyl-L-homocysteine. The enzyme catalyses adenosine(37) in tRNA + 2 reduced [2Fe-2S]-[ferredoxin] + 2 S-adenosyl-L-methionine = 2-methyladenosine(37) in tRNA + 5'-deoxyadenosine + L-methionine + 2 oxidized [2Fe-2S]-[ferredoxin] + S-adenosyl-L-homocysteine. Its function is as follows. Specifically methylates position 2 of adenine 2503 in 23S rRNA and position 2 of adenine 37 in tRNAs. m2A2503 modification seems to play a crucial role in the proofreading step occurring at the peptidyl transferase center and thus would serve to optimize ribosomal fidelity. The sequence is that of Dual-specificity RNA methyltransferase RlmN from Zymomonas mobilis subsp. mobilis (strain ATCC 31821 / ZM4 / CP4).